Here is a 246-residue protein sequence, read N- to C-terminus: 4-hydroxy-tetrahydrodipicolinate reductase (246 aa).

7 to 12 serves as a coordination point for NAD(+); that stretch reads GCSGRM. Position 34 (Arg34) interacts with NADP(+). Residues 76–78 and 102–105 contribute to the NAD(+) site; these read ATT and CPNT. His135 functions as the Proton donor/acceptor in the catalytic mechanism. His136 is a binding site for (S)-2,3,4,5-tetrahydrodipicolinate. Catalysis depends on Lys139, which acts as the Proton donor. 145–146 provides a ligand contact to (S)-2,3,4,5-tetrahydrodipicolinate; it reads GT.

Belongs to the DapB family.

The protein resides in the cytoplasm. It catalyses the reaction (S)-2,3,4,5-tetrahydrodipicolinate + NAD(+) + H2O = (2S,4S)-4-hydroxy-2,3,4,5-tetrahydrodipicolinate + NADH + H(+). It carries out the reaction (S)-2,3,4,5-tetrahydrodipicolinate + NADP(+) + H2O = (2S,4S)-4-hydroxy-2,3,4,5-tetrahydrodipicolinate + NADPH + H(+). It functions in the pathway amino-acid biosynthesis; L-lysine biosynthesis via DAP pathway; (S)-tetrahydrodipicolinate from L-aspartate: step 4/4. Its function is as follows. Catalyzes the conversion of 4-hydroxy-tetrahydrodipicolinate (HTPA) to tetrahydrodipicolinate. The chain is 4-hydroxy-tetrahydrodipicolinate reductase from Chlamydia abortus (strain DSM 27085 / S26/3) (Chlamydophila abortus).